A 175-amino-acid polypeptide reads, in one-letter code: Receptor activity-modifying protein 2 (175 aa).

Positions 1 to 42 are cleaved as a signal peptide; sequence MASLRVERAGGPRLPRTRVGRPAALRLLLLLGAVLNPHEALA. Residues 43-143 lie on the Extracellular side of the membrane; it reads QPLPTTGTPG…VQPTFSDPPE (101 aa). 2 disulfides stabilise this stretch: Cys-68–Cys-99 and Cys-84–Cys-131. N-linked (GlcNAc...) asparagine glycosylation occurs at Asn-130. The helical transmembrane segment at 144 to 165 threads the bilayer; the sequence is DVLLAMIIAPICLIPFLITLVV. Topologically, residues 166–175 are cytoplasmic; sequence WRSKDSEAQA.

This sequence belongs to the RAMP family. As to quaternary structure, heterodimer of CALCRL and RAMP2; the interaction forms the receptor complex for adrenomedullin/ADM. Heterodimer of CALCR and RAMP2; interaction forms the AMYR2 receptor complex for calcitonin/CALC and amylin/IAPP. As to expression, strongly expressed in lung, breast, immune system and fetal tissues.

The protein resides in the cell membrane. Accessory protein that interacts with and modulates the function of G-protein coupled receptors including calcitonin gene-related peptide type 1 receptor (CALCRL) and calcitonin receptor (CALCR). Required for the transport of CALCRL to the plasma membrane. Together with CALCRL, form a receptor complex for adrenomedullin/ADM. Together with CALCR, act as a receptor complex for calcitonin/CT/CALC. Together with CALCR, also act as a receptor complex for amylin/IAPP. This is Receptor activity-modifying protein 2 from Homo sapiens (Human).